A 681-amino-acid chain; its full sequence is DNA ligase (681 aa).

Residues 35-39 (DAEYD), 84-85 (SI), and Glu-121 contribute to the NAD(+) site. Lys-123 (N6-AMP-lysine intermediate) is an active-site residue. Positions 144, 180, 300, and 324 each coordinate NAD(+). Zn(2+)-binding residues include Cys-418, Cys-421, Cys-436, and Cys-442. In terms of domain architecture, BRCT spans 601-681 (AADGPASGKT…GLRRLLEQPA (81 aa)).

This sequence belongs to the NAD-dependent DNA ligase family. LigA subfamily. Mg(2+) serves as cofactor. It depends on Mn(2+) as a cofactor.

It carries out the reaction NAD(+) + (deoxyribonucleotide)n-3'-hydroxyl + 5'-phospho-(deoxyribonucleotide)m = (deoxyribonucleotide)n+m + AMP + beta-nicotinamide D-nucleotide.. In terms of biological role, DNA ligase that catalyzes the formation of phosphodiester linkages between 5'-phosphoryl and 3'-hydroxyl groups in double-stranded DNA using NAD as a coenzyme and as the energy source for the reaction. It is essential for DNA replication and repair of damaged DNA. The protein is DNA ligase of Aromatoleum aromaticum (strain DSM 19018 / LMG 30748 / EbN1) (Azoarcus sp. (strain EbN1)).